The following is a 204-amino-acid chain: Elongation factor Ts (204 aa).

Residues 80 to 83 (TDFV) are involved in Mg(2+) ion dislocation from EF-Tu.

Belongs to the EF-Ts family.

The protein resides in the cytoplasm. Associates with the EF-Tu.GDP complex and induces the exchange of GDP to GTP. It remains bound to the aminoacyl-tRNA.EF-Tu.GTP complex up to the GTP hydrolysis stage on the ribosome. The chain is Elongation factor Ts from Caldicellulosiruptor saccharolyticus (strain ATCC 43494 / DSM 8903 / Tp8T 6331).